The sequence spans 420 residues: Protein maelstrom homolog (420 aa).

Positions 4–73 (RRASRNAYYF…AQGKDSGPSE (70 aa)) form a DNA-binding region, HMG box. Disordered stretches follow at residues 62–94 (RAAQ…KQNV), 341–372 (GFSH…GQNS), and 392–420 (NIHK…SSLS). Composition is skewed to polar residues over residues 344 to 358 (HFSS…NTPT) and 392 to 407 (NIHK…SPYT).

The protein belongs to the maelstrom family. Interacts with SMARCB1, SIN3B and DDX4. Interacts with piRNA-associated proteins TDRD1, PIWIL1 and PIWIL2. Interacts with TEX19.

It localises to the cytoplasm. Its subcellular location is the nucleus. In terms of biological role, plays a central role during spermatogenesis by repressing transposable elements and preventing their mobilization, which is essential for the germline integrity. Acts via the piRNA metabolic process, which mediates the repression of transposable elements during meiosis by forming complexes composed of piRNAs and Piwi proteins and governs the methylation and subsequent repression of transposons. Its association with piP-bodies suggests a participation in the secondary piRNAs metabolic process. Required for the localization of germ-cell factors to the meiotic nuage. The chain is Protein maelstrom homolog (MAEL) from Bos taurus (Bovine).